The sequence spans 245 residues: Cysteine-rich secretory protein 3 (245 aa).

Residues 1–20 (MTLFPVLLFLVAGLLPSFPA) form the signal peptide. An SCP domain is found at 43–171 (VNKHNELRRA…VLKYYYVCQY (129 aa)). Cystine bridges form between Cys-191-Cys-198, Cys-194-Cys-203, Cys-207-Cys-240, Cys-216-Cys-234, and Cys-225-Cys-238. Residues 207 to 240 (CKYEDLYSNCKSLKLTLTCKHQLVRDSCKASCNC) form the ShKT domain. N-linked (GlcNAc...) asparagine glycosylation is present at Asn-239.

The protein belongs to the CRISP family. Interacts with A1BG. Salivary gland, pancreas and prostate &gt; epididymis, ovary, thymus and colon.

It is found in the secreted. This is Cysteine-rich secretory protein 3 (CRISP3) from Homo sapiens (Human).